A 470-amino-acid chain; its full sequence is Glutamate--tRNA ligase (470 aa).

A 'HIGH' region motif is present at residues 12-22 (PSPTGIFHVGG). Cys103, Cys105, Cys125, and Asp127 together coordinate Zn(2+). Positions 236 to 240 (KLSKR) match the 'KMSKS' region motif. Lys239 is a binding site for ATP.

It belongs to the class-I aminoacyl-tRNA synthetase family. Glutamate--tRNA ligase type 1 subfamily. Monomer. Requires Zn(2+) as cofactor.

It localises to the cytoplasm. The catalysed reaction is tRNA(Glu) + L-glutamate + ATP = L-glutamyl-tRNA(Glu) + AMP + diphosphate. In terms of biological role, catalyzes the attachment of glutamate to tRNA(Glu) in a two-step reaction: glutamate is first activated by ATP to form Glu-AMP and then transferred to the acceptor end of tRNA(Glu). This chain is Glutamate--tRNA ligase, found in Frankia casuarinae (strain DSM 45818 / CECT 9043 / HFP020203 / CcI3).